The chain runs to 309 residues: Probable ABC transporter permease protein y4oQ (309 aa).

The next 7 membrane-spanning stretches (helical) occupy residues 25 to 45, 89 to 109, 123 to 143, 174 to 194, 221 to 241, 246 to 266, and 278 to 298; these read VVWF…VPLV, LIYA…FAVL, LMLI…KLLY, VIIV…LAGL, LPHL…GVMA, IFLL…VYAY, and TTAI…PLIW. The ABC transmembrane type-1 domain occupies 85 to 296; that stretch reads IRVTLIYAVV…VFVLAISAPL (212 aa).

The protein belongs to the binding-protein-dependent transport system permease family. MalFG subfamily.

Its subcellular location is the cell inner membrane. In terms of biological role, probably part of the binding-protein-dependent transport system y4oPQRS. This system probably transports a sugar-like molecule. Probably responsible for the translocation of the substrate across the membrane. In Sinorhizobium fredii (strain NBRC 101917 / NGR234), this protein is Probable ABC transporter permease protein y4oQ.